Consider the following 169-residue polypeptide: S-ribosylhomocysteine lyase (169 aa).

His-54, His-58, and Cys-128 together coordinate Fe cation.

Belongs to the LuxS family. As to quaternary structure, homodimer. Requires Fe cation as cofactor.

It catalyses the reaction S-(5-deoxy-D-ribos-5-yl)-L-homocysteine = (S)-4,5-dihydroxypentane-2,3-dione + L-homocysteine. Its function is as follows. Involved in the synthesis of autoinducer 2 (AI-2) which is secreted by bacteria and is used to communicate both the cell density and the metabolic potential of the environment. The regulation of gene expression in response to changes in cell density is called quorum sensing. Catalyzes the transformation of S-ribosylhomocysteine (RHC) to homocysteine (HC) and 4,5-dihydroxy-2,3-pentadione (DPD). The protein is S-ribosylhomocysteine lyase of Shewanella halifaxensis (strain HAW-EB4).